Consider the following 82-residue polypeptide: ATP synthase subunit c, chloroplastic (82 aa).

A run of 2 helical transmembrane segments spans residues 3–23 (PIIS…AAIG) and 57–77 (LAFM…LLFA).

Belongs to the ATPase C chain family. As to quaternary structure, F-type ATPases have 2 components, F(1) - the catalytic core - and F(0) - the membrane proton channel. F(1) has five subunits: alpha(3), beta(3), gamma(1), delta(1), epsilon(1). F(0) has four main subunits: a(1), b(1), b'(1) and c(10-14). The alpha and beta chains form an alternating ring which encloses part of the gamma chain. F(1) is attached to F(0) by a central stalk formed by the gamma and epsilon chains, while a peripheral stalk is formed by the delta, b and b' chains.

The protein resides in the plastid. The protein localises to the chloroplast thylakoid membrane. Its function is as follows. F(1)F(0) ATP synthase produces ATP from ADP in the presence of a proton or sodium gradient. F-type ATPases consist of two structural domains, F(1) containing the extramembraneous catalytic core and F(0) containing the membrane proton channel, linked together by a central stalk and a peripheral stalk. During catalysis, ATP synthesis in the catalytic domain of F(1) is coupled via a rotary mechanism of the central stalk subunits to proton translocation. Functionally, key component of the F(0) channel; it plays a direct role in translocation across the membrane. A homomeric c-ring of between 10-14 subunits forms the central stalk rotor element with the F(1) delta and epsilon subunits. The chain is ATP synthase subunit c, chloroplastic from Cyanidium caldarium (Red alga).